We begin with the raw amino-acid sequence, 67 residues long: Ubiquinol-cytochrome c reductase complex assembly factor 6 (67 aa).

Residues 1 to 8 (MPGGVPWS) lie on the Mitochondrial matrix side of the membrane. Residues 9-25 (AYLKMLSSSLLAMCAGA) traverse the membrane as a helical; Signal-anchor for type II membrane protein segment. Residues 26–67 (QVVHWYYRPDLTIPEIPPKPGELKTELLGLKERRHEPHVSQQ) are Mitochondrial intermembrane-facing.

Belongs to the UQCC6 family. In terms of assembly, interacts with UQCRC1. Interacts with UQCRQ. Interacts with UQCC5. Forms a complex, named COMB/coordinator of mitochondrial CYTB biogenesis, composed of UQCC1, UQCC2, UQCC4, UQCC5 and UQCC6; stabilizes nascent cytochrome b/MT-CYB and promotes its membrane insertion. Forms a complex, named COMA, composed of UQCC1, UQCC2 and UQCC4; activates MT-CYB translation. Forms a complex, named COMC, composed of UQCC1, UQCC2; UQCC3 and UQCC4; mediates MT-CYB hemylation and association with the first nuclear-encoded complex III subunit UQCRQ. Interacts with MT-CYB. As to expression, highly expressed in brown adipose, cardiac and skeletal muscle (at protein level).

The protein localises to the mitochondrion inner membrane. In terms of biological role, required for the assembly and stability of the mitochondrial ubiquinol-cytochrome c reductase complex (complex III or cytochrome b-c1 complex), a multisubunit transmembrane complex that is part of the mitochondrial electron transport chain (ETC) which drives oxidative phosphorylation. Mediates early complex III biogenesis. Participates in regulating the levels of electron transport chain proteins, and therefore energy supply, in response to changes in energy demand. Also required for cytochrome c oxidase complex (complex IV) assembly. In Mus musculus (Mouse), this protein is Ubiquinol-cytochrome c reductase complex assembly factor 6.